The sequence spans 1469 residues: Protein BCL9 homolog (1469 aa).

Residues Met1–Gln16 are compositionally biased toward polar residues. 5 disordered regions span residues Met1 to Ala131, Ser161 to Pro187, Glu200 to Asp222, Glu422 to Pro442, and Gly454 to Ser474. At Ser9 the chain carries Phosphoserine. Thr11 carries the phosphothreonine modification. Residues Pro17–Ala34 are compositionally biased toward low complexity. Polar residues-rich tracts occupy residues Ser40–Pro60 and Ser90–Leu113. The span at Ser116–Ser130 shows a compositional bias: low complexity. At Ser206 the chain carries Phosphoserine. Position 208 is a phosphothreonine (Thr208). Phosphoserine is present on Ser210. Composition is skewed to polar residues over residues Glu422–Asp438 and Gly455–Ser474. An ARM-binding region spans residues Ser511–Asn555. Disordered regions lie at residues Gly728–Val830, Cys844–Val913, and Gln961–Asn991. The span at Pro731–Pro745 shows a compositional bias: low complexity. Polar residues predominate over residues Ile770–Gln781. Positions Ser782–Pro796 are enriched in low complexity. 2 stretches are compositionally biased toward polar residues: residues Pro806 to Val830 and Cys844 to Ser880. 3 positions are modified to phosphoserine: Ser883, Ser905, and Ser911. A compositionally biased stretch (polar residues) spans Pro904 to Val913.

The protein belongs to the BCL9 family. Binds to ARM and PYGO.

It is found in the nucleus. Involved in signal transduction through the Wnt pathway. This chain is Protein BCL9 homolog (lgs), found in Drosophila melanogaster (Fruit fly).